The following is a 116-amino-acid chain: Protein Rev (116 aa).

Residues serine 5 and serine 8 each carry the phosphoserine; by host CK2 modification. The homomultimerization stretch occupies residues 18–26 (LIKFLYQSN). The tract at residues 23–49 (YQSNPPPNPEGTRQARRNRRRRWRERQ) is disordered. The Nuclear localization signal and RNA-binding (RRE) motif lies at 34–50 (TRQARRNRRRRWRERQR). The span at 36 to 47 (QARRNRRRRWRE) shows a compositional bias: basic residues. A Nuclear export signal and binding to XPO1 motif is present at residues 73–84 (LQLPPLERLTLD). Serine 92 and serine 99 each carry phosphoserine; by host.

It belongs to the HIV-1 REV protein family. Homomultimer; when bound to the RRE. Multimeric assembly is essential for activity and may involve XPO1. Binds to human KPNB1, XPO1, TNPO1, RANBP5 and IPO7. Interacts with the viral Integrase. Interacts with human KHDRBS1. Interacts with human NAP1; this interaction decreases Rev multimerization and stimulates its activity. Interacts with human DEAD-box helicases DDX3 and DDX24; these interactions may serve for viral RNA export to the cytoplasm and packaging, respectively. Interacts with human PSIP1; this interaction may inhibit HIV-1 DNA integration by promoting dissociation of the Integrase-LEDGF/p75 complex. In terms of processing, asymmetrically arginine dimethylated at one site by host PRMT6. Methylation impairs the RNA-binding activity and export of viral RNA from the nucleus to the cytoplasm. Post-translationally, phosphorylated by protein kinase CK2. Presence of, and maybe binding to the N-terminus of the regulatory beta subunit of CK2 is necessary for CK2-mediated Rev's phosphorylation.

Its subcellular location is the host nucleus. It is found in the host nucleolus. The protein resides in the host cytoplasm. Its function is as follows. Escorts unspliced or incompletely spliced viral pre-mRNAs (late transcripts) out of the nucleus of infected cells. These pre-mRNAs carry a recognition sequence called Rev responsive element (RRE) located in the env gene, that is not present in fully spliced viral mRNAs (early transcripts). This function is essential since most viral proteins are translated from unspliced or partially spliced pre-mRNAs which cannot exit the nucleus by the pathway used by fully processed cellular mRNAs. Rev itself is translated from a fully spliced mRNA that readily exits the nucleus. Rev's nuclear localization signal (NLS) binds directly to KPNB1/Importin beta-1 without previous binding to KPNA1/Importin alpha-1. KPNB1 binds to the GDP bound form of RAN (Ran-GDP) and targets Rev to the nucleus. In the nucleus, the conversion from Ran-GDP to Ran-GTP dissociates Rev from KPNB1 and allows Rev's binding to the RRE in viral pre-mRNAs. Rev multimerization on the RRE via cooperative assembly exposes its nuclear export signal (NES) to the surface. Rev can then form a complex with XPO1/CRM1 and Ran-GTP, leading to nuclear export of the complex. Conversion from Ran-GTP to Ran-GDP mediates dissociation of the Rev/RRE/XPO1/RAN complex, so that Rev can return to the nucleus for a subsequent round of export. Beside KPNB1, also seems to interact with TNPO1/Transportin-1, RANBP5/IPO5 and IPO7/RANBP7 for nuclear import. The nucleoporin-like HRB/RIP is an essential cofactor that probably indirectly interacts with Rev to release HIV RNAs from the perinuclear region to the cytoplasm. This Human immunodeficiency virus type 1 group M subtype B (isolate PCV12) (HIV-1) protein is Protein Rev.